The following is a 685-amino-acid chain: Multicopper oxidase VdtB (685 aa).

The first 17 residues, 1 to 17 (MPAYLLLLACNVLLVLG), serve as a signal peptide directing secretion. Plastocyanin-like domains follow at residues 26-139 (LTWE…IRRK) and 168-368 (IMML…RYKN). An N-linked (GlcNAc...) asparagine glycan is attached at Asn71. His75, His77, His119, and His121 together coordinate Cu cation. N-linked (GlcNAc...) asparagine glycans are attached at residues Asn178, Asn229, Asn253, Asn432, and Asn475. Positions 466 to 585 (DDDLIIRTQN…DNGMAMAILD (120 aa)) constitute a Plastocyanin-like 3 domain. His500 serves as a coordination point for Cu cation. The N-linked (GlcNAc...) asparagine glycan is linked to Asn517. Residues 627-647 (SLVWAGGAAVVLLSLFIGGLW) form a helical membrane-spanning segment.

This sequence belongs to the multicopper oxidase family.

The protein resides in the membrane. It carries out the reaction 4 semiviriditoxin + O2 = 2 (M)-viriditoxin + 2 H2O. It participates in secondary metabolite biosynthesis. Its function is as follows. Multicopper oxidase; part of the gene cluster that mediates the biosynthesis of viriditoxin, one of the 'classical' secondary metabolites produced by fungi and that has antibacterial activity. The first step is performed by the polyketide synthase VdtA which condenses one acetyl-CoA and 6 malonyl-CoA units to form the heptaketide monomer backbone of viriditoxin. The product of VdtA is then O-methylated on C7 by the O-methyltransferase VdtC. The O-methyl group is important for the stereoselective coupling of the monomers at the final step of viriditoxin biosynthesis. The short-chain dehydrogenase/reductase VdtF then acts as a stereospecific reductase converting the pyrone to dihydropyrone via the reduction of the C3-C4 double bond. The FAD-binding monooxygenase VdtE then converts the ketone group into a methyl-ester group to yield semi-viriditoxin. Finally, the laccase VdtB is involved in dimerization of 2 semi-viriditoxin molecules to yield the final viriditoxin. VdtB is responsible for the regioselective 6,6'-coupling of semi-viriditoxin, which yields (M)-viriditoxin and (P)-viriditoxin at a ratio of 1:2. The non-catalytic carboxylesterase-like protein VdtD affects the stereochemistical outcome of the coupling. The highly reducing polyketide synthase VdtX is not involved in viriditoxin synthesis, but might possibly play a role in the production of additional metabolites not identified yet. This is Multicopper oxidase VdtB from Byssochlamys spectabilis (Paecilomyces variotii).